Reading from the N-terminus, the 266-residue chain is Indole-3-glycerol phosphate synthase (266 aa).

It belongs to the TrpC family.

The enzyme catalyses 1-(2-carboxyphenylamino)-1-deoxy-D-ribulose 5-phosphate + H(+) = (1S,2R)-1-C-(indol-3-yl)glycerol 3-phosphate + CO2 + H2O. The protein operates within amino-acid biosynthesis; L-tryptophan biosynthesis; L-tryptophan from chorismate: step 4/5. The chain is Indole-3-glycerol phosphate synthase from Janthinobacterium sp. (strain Marseille) (Minibacterium massiliensis).